A 508-amino-acid polypeptide reads, in one-letter code: Glycerol kinase (508 aa).

Residue threonine 14 participates in ADP binding. Residues threonine 14, threonine 15, and serine 16 each coordinate ATP. Residue threonine 14 coordinates sn-glycerol 3-phosphate. Position 18 (arginine 18) interacts with ADP. Sn-glycerol 3-phosphate-binding residues include arginine 84, glutamate 85, and tyrosine 136. Glycerol is bound by residues arginine 84, glutamate 85, and tyrosine 136. Residue histidine 232 is modified to Phosphohistidine; by HPr. Aspartate 246 is a sn-glycerol 3-phosphate binding site. Aspartate 246 and glutamine 247 together coordinate glycerol. Residues threonine 268 and glycine 311 each coordinate ADP. Residues threonine 268, glycine 311, glutamine 315, and glycine 412 each contribute to the ATP site. ADP-binding residues include glycine 412 and asparagine 416.

It belongs to the FGGY kinase family. In terms of assembly, homotetramer and homodimer (in equilibrium). Post-translationally, the phosphoenolpyruvate-dependent sugar phosphotransferase system (PTS), including enzyme I, and histidine-containing protein (HPr) are required for the phosphorylation, which leads to the activation of the enzyme.

The catalysed reaction is glycerol + ATP = sn-glycerol 3-phosphate + ADP + H(+). It functions in the pathway polyol metabolism; glycerol degradation via glycerol kinase pathway; sn-glycerol 3-phosphate from glycerol: step 1/1. With respect to regulation, activated by phosphorylation and inhibited by fructose 1,6-bisphosphate (FBP). Key enzyme in the regulation of glycerol uptake and metabolism. Catalyzes the phosphorylation of glycerol to yield sn-glycerol 3-phosphate. This is Glycerol kinase from Streptococcus pyogenes serotype M3 (strain ATCC BAA-595 / MGAS315).